A 161-amino-acid polypeptide reads, in one-letter code: Nucleotide-binding protein Swoo_3646 (161 aa).

This sequence belongs to the YajQ family.

In terms of biological role, nucleotide-binding protein. This is Nucleotide-binding protein Swoo_3646 from Shewanella woodyi (strain ATCC 51908 / MS32).